Here is a 588-residue protein sequence, read N- to C-terminus: Autophagy-related protein 22-1 (588 aa).

A helical membrane pass occupies residues 35 to 55 (YGWAAEVFTVCAMGSFLPITL). The N-linked (GlcNAc...) asparagine glycan is linked to N84. 3 helical membrane passes run 109 to 129 (TASF…ILII), 144 to 164 (LLVS…AVTP), and 168 to 188 (LLGG…FVLL). An N-linked (GlcNAc...) asparagine glycan is attached at N255. Transmembrane regions (helical) follow at residues 270–290 (GIGI…LVIV), 301–321 (LVLF…AFWL), 365–385 (ILLF…VSGT), 399–419 (AALG…AFSW), 434–454 (IIAC…GFIP), 471–493 (FPLG…SFFG), 507–527 (LYAI…GFIT), and 536–556 (AFFF…LVDA).

Belongs to the ATG22 family.

It localises to the vacuole membrane. In terms of biological role, vacuolar effluxer which mediate the efflux of amino acids resulting from autophagic degradation. The release of autophagic amino acids allows the maintenance of protein synthesis and viability during nitrogen starvation. This chain is Autophagy-related protein 22-1 (atg22-1), found in Emericella nidulans (strain FGSC A4 / ATCC 38163 / CBS 112.46 / NRRL 194 / M139) (Aspergillus nidulans).